Consider the following 152-residue polypeptide: Nucleoside diphosphate kinase B (152 aa).

The interval 1–66 is interaction with AKAP13; it reads MANLERTFIA…DRPFFPGLVK (66 aa). Lysine 12, phenylalanine 60, arginine 88, threonine 94, arginine 105, and asparagine 115 together coordinate ATP. Residue histidine 118 is the Pros-phosphohistidine intermediate of the active site.

Belongs to the NDK family. In terms of assembly, hexamer of two different chains: An and B (A6, A5B, A4B2, A3B3, A2B4, AB5, B6). Interacts with CAPN8. Interacts with AKAP13. Interacts with ITGB1BP1 (via C-terminal domain region). Interacts with BCL2L10. Mg(2+) is required as a cofactor. As to expression, expressed in the base region of the oxyntic and pyloric mucosae.

The protein localises to the cytoplasm. It localises to the cell projection. It is found in the lamellipodium. Its subcellular location is the ruffle. The protein resides in the nucleus. It carries out the reaction a 2'-deoxyribonucleoside 5'-diphosphate + ATP = a 2'-deoxyribonucleoside 5'-triphosphate + ADP. The catalysed reaction is a ribonucleoside 5'-diphosphate + ATP = a ribonucleoside 5'-triphosphate + ADP. The enzyme catalyses ATP + protein L-histidine = ADP + protein N-phospho-L-histidine.. Functionally, major role in the synthesis of nucleoside triphosphates other than ATP. The ATP gamma phosphate is transferred to the NDP beta phosphate via a ping-pong mechanism, using a phosphorylated active-site intermediate. Negatively regulates Rho activity by interacting with AKAP13/LBC. Acts as a transcriptional activator of the MYC gene; binds DNA non-specifically. Binds to both single-stranded guanine- and cytosine-rich strands within the nuclease hypersensitive element (NHE) III(1) region of the MYC gene promoter. Does not bind to duplex NHE III(1). Has G-quadruplex (G4) DNA-binding activity, which is independent of its nucleotide-binding and kinase activity. Binds both folded and unfolded G4 with similar low nanomolar affinities. Stabilizes folded G4s regardless of whether they are prefolded or not. Exhibits histidine protein kinase activity. This chain is Nucleoside diphosphate kinase B (Nme2), found in Mus musculus (Mouse).